The sequence spans 513 residues: Teichoic acid ribitol-phosphate polymerase TarK (513 aa).

Belongs to the CDP-glycerol glycerophosphotransferase family.

It localises to the cell membrane. The enzyme catalyses 4-O-[di(2R)-glycerylphospho]-N-acetyl-beta-D-mannosaminyl-(1-&gt;4)-N-acetyl-alpha-D-glucosaminyl di-trans,octa-cis-undecaprenyl diphosphate + n CDP-L-ribitol = 4-O-[(D-ribitylphospho)(n)-di{(2R)-glycerylphospho}]-N-acetyl-beta-D-mannosaminyl-(1-&gt;4)-N-acetyl-alpha-D-glucosaminyl di-trans,octa-cis-undecaprenyl diphosphate + n CMP + n H(+). Its pathway is cell wall biogenesis; poly(ribitol phosphate) teichoic acid biosynthesis. Functionally, can catalyze the polymerization of the main chain of the major teichoic acid by sequential transfer of ribitol phosphate units from CDP-ribitol to the second glycerol phosphate attached to the disaccharide linkage unit. The chain is Teichoic acid ribitol-phosphate polymerase TarK (tarK) from Staphylococcus aureus (strain NCTC 8325 / PS 47).